Here is a 111-residue protein sequence, read N- to C-terminus: Succinate dehydrogenase assembly factor 1B, mitochondrial (111 aa).

It belongs to the complex I LYR family. SDHAF1 subfamily. In terms of assembly, interacts with the iron-sulfur protein subunit within the SDH catalytic dimer.

It localises to the mitochondrion matrix. Its function is as follows. Plays an essential role in the assembly of succinate dehydrogenase (SDH), an enzyme complex (also referred to as respiratory complex II) that is a component of both the tricarboxylic acid (TCA) cycle and the mitochondrial electron transport chain, and which couples the oxidation of succinate to fumarate with the reduction of ubiquinone (coenzyme Q) to ubiquinol. Promotes maturation of the iron-sulfur protein subunit of the SDH catalytic dimer, protecting it from the deleterious effects of oxidants. May act together with SDHAF3. This is Succinate dehydrogenase assembly factor 1B, mitochondrial from Dictyostelium discoideum (Social amoeba).